Reading from the N-terminus, the 428-residue chain is Trigger factor (428 aa).

The PPIase FKBP-type domain maps to 163–248 (GDIVDIDFEG…VNDVKVKELP (86 aa)).

The protein belongs to the FKBP-type PPIase family. Tig subfamily.

The protein localises to the cytoplasm. It catalyses the reaction [protein]-peptidylproline (omega=180) = [protein]-peptidylproline (omega=0). In terms of biological role, involved in protein export. Acts as a chaperone by maintaining the newly synthesized protein in an open conformation. Functions as a peptidyl-prolyl cis-trans isomerase. This chain is Trigger factor, found in Acetivibrio thermocellus (strain ATCC 27405 / DSM 1237 / JCM 9322 / NBRC 103400 / NCIMB 10682 / NRRL B-4536 / VPI 7372) (Clostridium thermocellum).